Reading from the N-terminus, the 319-residue chain is Phospho-N-acetylmuramoyl-pentapeptide-transferase (319 aa).

10 helical membrane passes run 5–25 (LIPFISSFALTVIFLPLFIGF), 51–71 (TMGGVVFMLAGVISTLWVLIW), 79–99 (AWILIIAFLGYGIIGFLDDGI), 116–136 (LGQIIIAALIITLAFSDHFAF), 149–169 (SFLFSLFVLFWLVGFSNAVNL), 172–192 (GLDGLATGLSIIAYATYAWIA), 197–217 (NWVIVVFTLSVIGGLVGFFIF), 224–244 (IFMGDAGSLALGGGLATVSIF), 252–272 (LLIGIVFVLETLSVILQVISF), and 299–319 (VDIVFWIVGLIGSIIYLIIWG).

It belongs to the glycosyltransferase 4 family. MraY subfamily. It depends on Mg(2+) as a cofactor.

It is found in the cell membrane. The enzyme catalyses UDP-N-acetyl-alpha-D-muramoyl-L-alanyl-gamma-D-glutamyl-L-lysyl-D-alanyl-D-alanine + di-trans,octa-cis-undecaprenyl phosphate = Mur2Ac(oyl-L-Ala-gamma-D-Glu-L-Lys-D-Ala-D-Ala)-di-trans,octa-cis-undecaprenyl diphosphate + UMP. The protein operates within cell wall biogenesis; peptidoglycan biosynthesis. Catalyzes the initial step of the lipid cycle reactions in the biosynthesis of the cell wall peptidoglycan: transfers peptidoglycan precursor phospho-MurNAc-pentapeptide from UDP-MurNAc-pentapeptide onto the lipid carrier undecaprenyl phosphate, yielding undecaprenyl-pyrophosphoryl-MurNAc-pentapeptide, known as lipid I. The polypeptide is Phospho-N-acetylmuramoyl-pentapeptide-transferase (Lactobacillus johnsonii (strain CNCM I-12250 / La1 / NCC 533)).